A 614-amino-acid chain; its full sequence is METREGSLTWSVLKCDLHPWIKEAIKSLGYPTMTPVQASTIPLFSGNKDVVVEAVTGSGKTLAFVIPVLQKLSNRLYNIDEEGENPEPVKKGHMLSIILSPTRELAKQIQTVFDKVLEYIPEDKATIKTQLLVGSLSSVREDIDYFLTNKTHILIATPGRLLDFLSSNYVKTNSVEIAVLDEADKLLDISFERDVIKILKQLPKQRRTGLFSATISSAGDTIFRTGMANPVKIVVKSKNSKNAAPTSLNVSYMHVEPETKISALIALIKDYRFQKCIVYFPTCTSVKHFYSVFQTLVNVEEEDRYKFFSLHGQLSTKPRLKTLQNFSEGDSMLHKHVLLTTDVAARGIDIPDVDLVIQLDPPTDPDVFFHRSGRTGRANKVGQAIVMLNNNSREEDYVNFMEVKGMTMSNMECPNISKIHDKFQKKFRKYMLEDRARHELAIKSYVGFVRYYSKHMASSIFRLQTLDYVGLGKMYGLLRLPKMPESRYIPNEEMPEDGWLGDVIDMDKYEYADKQKEESRKKNLEEDKARKVHDAKKRKELKVKNEAWSSKTDKIETKQERREKMKRKREAIEKQLMDDSSSDEETKVDWKEMVKTNKKKKTPSDSMQGSFDDL.

Residues 10–38 carry the Q motif motif; that stretch reads WSVLKCDLHPWIKEAIKSLGYPTMTPVQA. The 193-residue stretch at 41 to 233 folds into the Helicase ATP-binding domain; sequence IPLFSGNKDV…RTGMANPVKI (193 aa). 54–61 is a binding site for ATP; the sequence is AVTGSGKT. Positions 181-184 match the DEAD box motif; that stretch reads DEAD. A Helicase C-terminal domain is found at 260–431; the sequence is KISALIALIK…KFQKKFRKYM (172 aa). Positions 510-581 form a coiled coil; sequence EYADKQKEES…IEKQLMDDSS (72 aa). Residues 514–529 are compositionally biased toward basic and acidic residues; it reads KQKEESRKKNLEEDKA. Residues 514-614 form a disordered region; it reads KQKEESRKKN…DSMQGSFDDL (101 aa). Residues 530–541 show a composition bias toward basic residues; it reads RKVHDAKKRKEL. Composition is skewed to basic and acidic residues over residues 551 to 563 and 584 to 595; these read KTDKIETKQERRE and EETKVDWKEMVK. A compositionally biased stretch (polar residues) spans 604–614; that stretch reads SDSMQGSFDDL.

The protein belongs to the DEAD box helicase family. DDX55/SPB4 subfamily. In terms of assembly, component of pre-60S ribosomal complexes.

It is found in the nucleus. The protein resides in the nucleolus. It carries out the reaction ATP + H2O = ADP + phosphate + H(+). Functionally, ATP-binding RNA helicase involved in the biogenesis of 60S ribosomal subunits. Binds 90S pre-ribosomal particles and dissociates from pre-60S ribosomal particles after processing of 27SB pre-rRNA. Required for the normal formation of 18S rRNA through the processing of pre-rRNAs at sites A0, A1 and A2, and the normal formation of 25S and 5.8S rRNAs through the processing of pre-rRNAs at sites C1 and C2. This Debaryomyces hansenii (strain ATCC 36239 / CBS 767 / BCRC 21394 / JCM 1990 / NBRC 0083 / IGC 2968) (Yeast) protein is ATP-dependent rRNA helicase SPB4.